Here is a 129-residue protein sequence, read N- to C-terminus: Small ribosomal subunit protein bS6 (129 aa).

The interval 100–129 is disordered; the sequence is SIMLKQKEERAPRREERSEAKPEAKSEAAE. Residues 104–129 show a composition bias toward basic and acidic residues; the sequence is KQKEERAPRREERSEAKPEAKSEAAE.

This sequence belongs to the bacterial ribosomal protein bS6 family.

In terms of biological role, binds together with bS18 to 16S ribosomal RNA. In Vibrio parahaemolyticus serotype O3:K6 (strain RIMD 2210633), this protein is Small ribosomal subunit protein bS6.